A 97-amino-acid polypeptide reads, in one-letter code: Class II hydrophobin NC2 (97 aa).

Residues 1–17 (MQFTIATVLSLLTITLA) form the signal peptide. Intrachain disulfides connect cysteine 31–cysteine 79, cysteine 40–cysteine 70, cysteine 41–cysteine 53, and cysteine 80–cysteine 91. N-linked (GlcNAc...) asparagine glycosylation is present at asparagine 62.

It belongs to the cerato-ulmin hydrophobin family. In terms of assembly, homotrimer. Further self-assembles to form highly ordered films at water-air interfaces through intermolecular interactions.

It localises to the secreted. It is found in the cell wall. Aerial growth, conidiation, and dispersal of filamentous fungi in the environment rely upon a capability of their secreting small amphipathic proteins called hydrophobins (HPBs) with low sequence identity. Class I can self-assemble into an outermost layer of rodlet bundles on aerial cell surfaces, conferring cellular hydrophobicity that supports fungal growth, development and dispersal; whereas Class II form highly ordered films at water-air interfaces through intermolecular interactions but contribute nothing to the rodlet structure. NC2 is a class II hydrophobin that has the potential to adsorb to the hydrophobic interface at the hydrophobic-hydrophilic interface at very high rate but the predicted self-assembly NC2 film possesses a lower flexural rigidity than other class II hydrophobins such as HFBII from Hypocrea jecorina (also known as Trichoderma reesei). The sequence is that of Class II hydrophobin NC2 from Neurospora crassa (strain ATCC 24698 / 74-OR23-1A / CBS 708.71 / DSM 1257 / FGSC 987).